Consider the following 1320-residue polypeptide: Sal-like protein 3 (1320 aa).

Residues 1–11 are compositionally biased toward basic residues; the sequence is MSRRKQAKPQH. Residues 1–49 are disordered; sequence MSRRKQAKPQHLKSDEELPPQDGASEHGVPGDGAEDADSGSESRSGSEE. A compositionally biased stretch (low complexity) spans 40–49; that stretch reads GSESRSGSEE. Residues 51-73 form a C2H2-type 1; atypical zinc finger; that stretch reads SVCEKCCAEFFKWADFLQHKKTC. 2 disordered regions span residues 84–166 and 271–367; these read DDEP…AFSM and LSAG…NLPN. Residues 88 to 100 are compositionally biased toward pro residues; that stretch reads APPSEDFPEPSPA. Ser109 carries the post-translational modification Phosphoserine. Residues 121–131 show a composition bias toward basic and acidic residues; that stretch reads SEVKAATKEAE. The span at 143–160 shows a compositional bias: pro residues; it reads PPGPSVPPPPPALPPQPE. Positions 271–289 are enriched in low complexity; the sequence is LSAGPATASAGSGSTLPAA. Polar residues predominate over residues 295–311; sequence HLSQPASGTSTPCSTSA. Low complexity-rich tracts occupy residues 323–342 and 355–367; these read STGPAPGAVAAASSTVGNAV and PGPLLSSASNLPN. 2 consecutive C2H2-type zinc fingers follow at residues 427–449 and 455–477; these read HKCRFCAKVFGSDSALQIHLRSH and FKCNICGNRFSTKGNLKVHFQRH. The tract at residues 534–623 is disordered; that stretch reads GLQLPPTVPG…RTGDAPVVGG (90 aa). Residues 543–554 are compositionally biased toward polar residues; the sequence is GTHNYTDSPSIT. Residues 555 to 568 show a composition bias toward low complexity; it reads PVSRSPQRPSPASS. Positions 569-583 are enriched in polar residues; the sequence is ECTSLSPGLNNTESG. 3 consecutive C2H2-type zinc fingers follow at residues 692-714, 720-742, and 752-774; these read NQCVICHRVLSCQSALKMHYRTH, FKCKICGRAFTTKGNLKTHFGVH, and HSCPICQKKFTNAVVLQQHIRMH. 2 disordered regions span residues 807–846 and 878–972; these read SSFDDDIDENSMEEDSELKDTASDSSKPLLSYSGSCPPSP and VENG…GHPG. Over residues 809–823 the composition is skewed to acidic residues; sequence FDDDIDENSMEEDSE. Low complexity-rich tracts occupy residues 834–846 and 902–923; these read PLLSYSGSCPPSP and RSAGSPALSESSSSQALSPAHS. Ser932 is subject to Phosphoserine. C2H2-type zinc fingers lie at residues 997-1019, 1025-1047, 1133-1155, and 1161-1183; these read TVCGVCGKPFACKSALEIHYRSH, FVCTVCRRGCSTMGNLKQHLLTH, HNCQSCGKTFSSASALQIHERTH, and FGCTICGRAFTTKGNLKVHMGTH. A Phosphoserine modification is found at Ser1197.

The protein belongs to the sal C2H2-type zinc-finger protein family. In terms of tissue distribution, in adult brain, testis and kidney. In lower levels also in adult ovaries and embryonic stem cells. In embryo in developing neuroectoderm of brain, inner ear and spinal cord. Also weakly and transiently expressed in embryonic branchial arches, notochord, limb buds and heart.

The protein resides in the nucleus. In terms of biological role, probable transcription factor. This is Sal-like protein 3 (Sall3) from Mus musculus (Mouse).